The chain runs to 509 residues: Dihydrolipoyl dehydrogenase, mitochondrial (509 aa).

The N-terminal 35 residues, 1 to 35 (MQSWSRVYCSLAKRGHFNRISHGLQGLSAVPLRTY), are a transit peptide targeting the mitochondrion. The residue at position 66 (Lys66) is an N6-acetyllysine; alternate. The residue at position 66 (Lys66) is an N6-succinyllysine; alternate. FAD contacts are provided by residues 71–80 (EKNETLGGTC) and Lys89. Cys80 and Cys85 are oxidised to a cystine. N6-acetyllysine; alternate is present on residues Lys104, Lys122, Lys132, and Lys143. N6-succinyllysine; alternate occurs at positions 104, 122, 132, and 143. An FAD-binding site is contributed by Gly154. An N6-succinyllysine mark is found at Lys159 and Lys166. 183–185 (TGS) is a binding site for FAD. NAD(+)-binding positions include 220 to 227 (GAGVIGVE) and Glu243. Lys273 and Lys277 each carry N6-succinyllysine. Residue Val278 coordinates NAD(+). 2 positions are modified to phosphoserine: Ser285 and Ser297. Gly314 is a binding site for NAD(+). At Lys346 the chain carries N6-acetyllysine. FAD contacts are provided by residues Asp355 and 361–364 (MLAH). The residue at position 410 (Lys410) is an N6-acetyllysine; alternate. Lys410 bears the N6-succinyllysine; alternate mark. Lys417 and Lys420 each carry N6-acetyllysine. An N6-succinyllysine modification is found at Lys430. The Proton acceptor role is filled by His487. Phosphoserine is present on Ser502. An N6-acetyllysine; alternate modification is found at Lys505. The residue at position 505 (Lys505) is an N6-succinyllysine; alternate.

It belongs to the class-I pyridine nucleotide-disulfide oxidoreductase family. In terms of assembly, homodimer. Part of the multimeric pyruvate dehydrogenase complex that contains multiple copies of pyruvate dehydrogenase (subunits PDHA (PDHA1 or PDHA2) and PDHB, E1), dihydrolipoamide acetyltransferase (DLAT, E2) and lipoamide dehydrogenase (DLD, E3). These subunits are bound to an inner core composed of about 48 DLAT and 12 PDHX molecules (by non covalent bonds). The 2-oxoglutarate dehydrogenase complex is composed of OGDH (2-oxoglutarate dehydrogenase; E1), DLST (dihydrolipoamide succinyltransferase; E2), DLD (dihydrolipoamide dehydrogenase; E3) and the assembly factor KGD4. It contains multiple copies of the three enzymatic components (E1, E2 and E3). In the nucleus, the 2-oxoglutarate dehydrogenase complex associates with KAT2A. Interacts with PDHX. FAD serves as cofactor. Tyrosine phosphorylated.

Its subcellular location is the mitochondrion matrix. The protein localises to the nucleus. It localises to the cell projection. It is found in the cilium. The protein resides in the flagellum. Its subcellular location is the cytoplasmic vesicle. The protein localises to the secretory vesicle. It localises to the acrosome. The catalysed reaction is N(6)-[(R)-dihydrolipoyl]-L-lysyl-[protein] + NAD(+) = N(6)-[(R)-lipoyl]-L-lysyl-[protein] + NADH + H(+). In terms of biological role, lipoamide dehydrogenase is a component of the glycine cleavage system as well as an E3 component of three alpha-ketoacid dehydrogenase complexes (pyruvate-, alpha-ketoglutarate-, and branched-chain amino acid-dehydrogenase complex). The 2-oxoglutarate dehydrogenase complex is mainly active in the mitochondrion. A fraction of the 2-oxoglutarate dehydrogenase complex also localizes in the nucleus and is required for lysine succinylation of histones: associates with KAT2A on chromatin and provides succinyl-CoA to histone succinyltransferase KAT2A. In monomeric form may have additional moonlighting function as serine protease. Involved in the hyperactivation of spermatazoa during capacitation and in the spermatazoal acrosome reaction. This chain is Dihydrolipoyl dehydrogenase, mitochondrial (DLD), found in Pongo abelii (Sumatran orangutan).